The primary structure comprises 92 residues: Evasin P942 (92 aa).

The first 26 residues, 1-26 (MEVKTFAFLQIAVLIALGLHLAPAGS), serve as a signal peptide directing secretion. 3 cysteine pairs are disulfide-bonded: Cys44–Cys63, Cys48–Cys65, and Cys59–Cys76. The N-linked (GlcNAc...) asparagine glycan is linked to Asn47. A glycan (N-linked (GlcNAc...) asparagine) is linked at Asn70.

Its subcellular location is the secreted. In terms of biological role, salivary chemokine-binding protein which binds to host chemokines CXCL1, CXCL2, CXCL3, CXCL4, CXCL5, CXCL6, CXCL10, CXCL11 and CXCL13. The sequence is that of Evasin P942 from Ixodes ricinus (Common tick).